The following is a 188-amino-acid chain: Nicotinamide-nucleotide adenylyltransferase (188 aa).

A disordered region spans residues 166-188 (SDSLERYAATGESLPESLDDLDD).

Belongs to the archaeal NMN adenylyltransferase family.

The protein localises to the cytoplasm. It catalyses the reaction beta-nicotinamide D-ribonucleotide + ATP + H(+) = diphosphate + NAD(+). Its pathway is cofactor biosynthesis; NAD(+) biosynthesis; NAD(+) from nicotinamide D-ribonucleotide: step 1/1. This is Nicotinamide-nucleotide adenylyltransferase from Haloarcula marismortui (strain ATCC 43049 / DSM 3752 / JCM 8966 / VKM B-1809) (Halobacterium marismortui).